Reading from the N-terminus, the 348-residue chain is Rhodopsin (348 aa).

Residues 1–33 are Extracellular-facing; sequence TEGPFFYIPMVNTSGVVRSPYEYPQYYLVNPAA. Asn-12 carries an N-linked (GlcNAc...) asparagine glycan. The helical transmembrane segment at 34-58 threads the bilayer; sequence YAILGAYMFFLIIIGFPVNFMTLYV. The Cytoplasmic segment spans residues 59–70; the sequence is TLEHKKLRTPLN. A helical membrane pass occupies residues 71–93; sequence YILLNLAVADLFMVIGGFTTTMY. The Extracellular portion of the chain corresponds to 94 to 107; that stretch reads SSMHGYFVLGRLGC. Cys-107 and Cys-184 are disulfide-bonded. A helical membrane pass occupies residues 108–130; that stretch reads NMEGFSATLGGMISLWSLAVLAI. Residues 131–133 carry the 'Ionic lock' involved in activated form stabilization motif; the sequence is ERW. Over 131-149 the chain is Cytoplasmic; the sequence is ERWVVVCKPISNFRFGENH. Residues 150-170 traverse the membrane as a helical segment; it reads AIMGVSLTWFMALACTVPPLV. At 171-199 the chain is on the extracellular side; the sequence is GWSRYIPEGMQCSCGIDYYTRAEGFNNES. Asn-197 is a glycosylation site (N-linked (GlcNAc...) asparagine). Residues 200–221 traverse the membrane as a helical segment; the sequence is FVLYMFFCHFLVPLVIIFFCYG. Topologically, residues 222–249 are cytoplasmic; it reads RLLCAVKEAAAAQQESETTQRAEREVTR. Residues 250–271 traverse the membrane as a helical segment; the sequence is MVIIMVIGFLVCWLPYASVAWF. The Extracellular segment spans residues 272 to 283; sequence IFTHQGSEFGPL. A helical transmembrane segment spans residues 284-305; the sequence is FMTIPAFFAKSSSIYNPMIYIC. An N6-(retinylidene)lysine modification is found at Lys-293. Topologically, residues 306–348 are cytoplasmic; it reads MNKQFRNCMITTLFCGKNPFEGEEEGASSTKTEASSASSVSPA. Cys-320 carries the S-palmitoyl cysteine lipid modification. Residues 327 to 348 form a disordered region; it reads GEEEGASSTKTEASSASSVSPA. Low complexity predominate over residues 332–348; sequence ASSTKTEASSASSVSPA.

Belongs to the G-protein coupled receptor 1 family. Opsin subfamily. Post-translationally, phosphorylated on some or all of the serine and threonine residues present in the C-terminal region. In terms of processing, contains one covalently linked retinal chromophore.

The protein resides in the membrane. It is found in the cell projection. The protein localises to the cilium. It localises to the photoreceptor outer segment. Its function is as follows. Photoreceptor required for image-forming vision at low light intensity. While most salt water fish species use retinal as chromophore, most freshwater fish use 3-dehydroretinal, or a mixture of retinal and 3-dehydroretinal. Light-induced isomerization of 11-cis to all-trans retinal triggers a conformational change that activates signaling via G-proteins. Subsequent receptor phosphorylation mediates displacement of the bound G-protein alpha subunit by arrestin and terminates signaling. The protein is Rhodopsin (rho) of Sargocentron punctatissimum (Speckled squirrelfish).